The chain runs to 247 residues: Probable transcriptional regulatory protein HRM2_04000 (247 aa).

This sequence belongs to the TACO1 family.

Its subcellular location is the cytoplasm. The protein is Probable transcriptional regulatory protein HRM2_04000 of Desulforapulum autotrophicum (strain ATCC 43914 / DSM 3382 / VKM B-1955 / HRM2) (Desulfobacterium autotrophicum).